Here is a 208-residue protein sequence, read N- to C-terminus: Thymidylate kinase (208 aa).

12 to 19 (GVDGAGKS) lines the ATP pocket.

The protein belongs to the thymidylate kinase family.

The enzyme catalyses dTMP + ATP = dTDP + ADP. In terms of biological role, phosphorylation of dTMP to form dTDP in both de novo and salvage pathways of dTTP synthesis. This chain is Thymidylate kinase, found in Bordetella bronchiseptica (strain ATCC BAA-588 / NCTC 13252 / RB50) (Alcaligenes bronchisepticus).